Reading from the N-terminus, the 379-residue chain is Homoserine O-acetyltransferase (379 aa).

An AB hydrolase-1 domain is found at 54-332; sequence NAILVCHALS…PYQSEEIVKS (279 aa). The active-site Nucleophile is Ser159. Arg228 serves as a coordination point for substrate. Catalysis depends on residues Asp318 and His352. Substrate is bound at residue Asp353.

It belongs to the AB hydrolase superfamily. MetX family. Homodimer.

Its subcellular location is the cytoplasm. The enzyme catalyses L-homoserine + acetyl-CoA = O-acetyl-L-homoserine + CoA. It participates in amino-acid biosynthesis; L-methionine biosynthesis via de novo pathway; O-acetyl-L-homoserine from L-homoserine: step 1/1. Its function is as follows. Transfers an acetyl group from acetyl-CoA to L-homoserine, forming acetyl-L-homoserine. The polypeptide is Homoserine O-acetyltransferase (Leptospira meyeri).